The chain runs to 394 residues: Glutamyl-tRNA reductase (394 aa).

Substrate-binding positions include 45 to 48 (TCNR), serine 99, 104 to 106 (EEQ), and glutamine 110. Cysteine 46 serves as the catalytic Nucleophile. 175 to 180 (GLGNIG) serves as a coordination point for NADP(+).

Belongs to the glutamyl-tRNA reductase family. Homodimer.

It catalyses the reaction (S)-4-amino-5-oxopentanoate + tRNA(Glu) + NADP(+) = L-glutamyl-tRNA(Glu) + NADPH + H(+). Its pathway is porphyrin-containing compound metabolism; protoporphyrin-IX biosynthesis; 5-aminolevulinate from L-glutamyl-tRNA(Glu): step 1/2. Functionally, catalyzes the NADPH-dependent reduction of glutamyl-tRNA(Glu) to glutamate 1-semialdehyde (GSA). This Caldicellulosiruptor saccharolyticus (strain ATCC 43494 / DSM 8903 / Tp8T 6331) protein is Glutamyl-tRNA reductase.